The primary structure comprises 407 residues: 1-deoxy-D-xylulose 5-phosphate reductoisomerase (407 aa).

NADPH is bound by residues Thr-27, Gly-28, Ser-29, Ile-30, Ala-53, Arg-54, Asn-55, and Asn-140. Residue Lys-141 participates in 1-deoxy-D-xylulose 5-phosphate binding. Glu-142 provides a ligand contact to NADPH. Residue Asp-166 coordinates Mn(2+). 4 residues coordinate 1-deoxy-D-xylulose 5-phosphate: Ser-167, Glu-168, Ser-192, and His-215. Glu-168 is a Mn(2+) binding site. Gly-221 serves as a coordination point for NADPH. Ser-228, Asn-233, Lys-234, and Glu-237 together coordinate 1-deoxy-D-xylulose 5-phosphate. Residue Glu-237 participates in Mn(2+) binding.

The protein belongs to the DXR family. Mg(2+) serves as cofactor. Mn(2+) is required as a cofactor.

The enzyme catalyses 2-C-methyl-D-erythritol 4-phosphate + NADP(+) = 1-deoxy-D-xylulose 5-phosphate + NADPH + H(+). The protein operates within isoprenoid biosynthesis; isopentenyl diphosphate biosynthesis via DXP pathway; isopentenyl diphosphate from 1-deoxy-D-xylulose 5-phosphate: step 1/6. In terms of biological role, catalyzes the NADPH-dependent rearrangement and reduction of 1-deoxy-D-xylulose-5-phosphate (DXP) to 2-C-methyl-D-erythritol 4-phosphate (MEP). In Oleidesulfovibrio alaskensis (strain ATCC BAA-1058 / DSM 17464 / G20) (Desulfovibrio alaskensis), this protein is 1-deoxy-D-xylulose 5-phosphate reductoisomerase.